A 407-amino-acid chain; its full sequence is Imidazolonepropionase (407 aa).

Fe(3+) is bound by residues His-74 and His-76. Zn(2+)-binding residues include His-74 and His-76. Arg-83, Tyr-146, and His-179 together coordinate 4-imidazolone-5-propanoate. Position 146 (Tyr-146) interacts with N-formimidoyl-L-glutamate. His-244 lines the Fe(3+) pocket. His-244 is a binding site for Zn(2+). Gln-247 contacts 4-imidazolone-5-propanoate. Asp-319 contacts Fe(3+). Asp-319 provides a ligand contact to Zn(2+). The N-formimidoyl-L-glutamate site is built by Asn-321 and Gly-323. 4-imidazolone-5-propanoate is bound at residue Thr-324.

This sequence belongs to the metallo-dependent hydrolases superfamily. HutI family. Zn(2+) serves as cofactor. The cofactor is Fe(3+).

It localises to the cytoplasm. It carries out the reaction 4-imidazolone-5-propanoate + H2O = N-formimidoyl-L-glutamate. It functions in the pathway amino-acid degradation; L-histidine degradation into L-glutamate; N-formimidoyl-L-glutamate from L-histidine: step 3/3. In terms of biological role, catalyzes the hydrolytic cleavage of the carbon-nitrogen bond in imidazolone-5-propanoate to yield N-formimidoyl-L-glutamate. It is the third step in the universal histidine degradation pathway. This Salmonella typhimurium (strain LT2 / SGSC1412 / ATCC 700720) protein is Imidazolonepropionase.